A 409-amino-acid chain; its full sequence is MERAVLRYKNSVISGLIINESNGLITLKASNGYNMTFDRSEVEFIERKKEESPERKSIEAVEKGQGDRKISVLATGGTIASRVDYETGAVSPVSDPELIFGGSDILTRFTVAVKPILNEFSENLKPADWIRIGQAVADESSEADGVVVAHGTDTMAYTSSALAFMFERMRVPVVFVGAQRSSDRPSSDSRENMQAAINFAGTDLGEVGISMHASTSDGHVSLLRSVRSRKMHTSRRDAFESIGIPPLAEYDGSVKFLIDYRRVSDTVEFRPDLDDRVSMIYFHPGLNAGDLENMIAEKHAVVILGTGLGHMAKDLIPVVKKYTADGNYAIMASQCIYGSTDLNVYSTGRELLAAGVIEAGNMVPEVAYVKAMYLLGQYPHDLFRDLFRKNMRGEIVERDLPVEIIKLGR.

The Asparaginase/glutaminase domain maps to 68-390 (RKISVLATGG…DLFRDLFRKN (323 aa)). Residues Thr78, Thr152, Asp153, and Lys230 contribute to the active site.

The protein belongs to the asparaginase 1 family. GatD subfamily. In terms of assembly, heterodimer of GatD and GatE.

The catalysed reaction is L-glutamyl-tRNA(Gln) + L-glutamine + ATP + H2O = L-glutaminyl-tRNA(Gln) + L-glutamate + ADP + phosphate + H(+). Functionally, allows the formation of correctly charged Gln-tRNA(Gln) through the transamidation of misacylated Glu-tRNA(Gln) in organisms which lack glutaminyl-tRNA synthetase. The reaction takes place in the presence of glutamine and ATP through an activated gamma-phospho-Glu-tRNA(Gln). The GatDE system is specific for glutamate and does not act on aspartate. This is Glutamyl-tRNA(Gln) amidotransferase subunit D from Thermoplasma acidophilum (strain ATCC 25905 / DSM 1728 / JCM 9062 / NBRC 15155 / AMRC-C165).